The primary structure comprises 106 residues: Protein RnfH (106 aa).

It belongs to the UPF0125 (RnfH) family.

The chain is Protein RnfH from Ectopseudomonas mendocina (strain ymp) (Pseudomonas mendocina).